The primary structure comprises 327 residues: Peroxidase N (327 aa).

Positions 1–28 are cleaved as a signal peptide; that stretch reads MKTQTKVMGGHVLLTVFTLCMLCSAVRA. The residue at position 29 (Gln-29) is a Pyrrolidone carboxylic acid. Cystine bridges form between Cys-39–Cys-116, Cys-72–Cys-77, Cys-122–Cys-323, and Cys-200–Cys-232. The active-site Proton acceptor is His-70. 5 residues coordinate Ca(2+): Asp-71, Val-74, Gly-76, Asp-78, and Ser-80. A glycan (N-linked (GlcNAc...) asparagine) is linked at Asn-155. A substrate-binding site is contributed by Pro-163. N-linked (GlcNAc...) asparagine glycosylation is present at Asn-182. Residue His-193 coordinates heme b. Thr-194 lines the Ca(2+) pocket. N-linked (GlcNAc...) asparagine glycans are attached at residues Asn-209 and Asn-239. Asp-245 lines the Ca(2+) pocket. A glycan (N-linked (GlcNAc...) asparagine) is linked at Asn-247. Ca(2+) contacts are provided by Ser-248 and Asp-253. An N-linked (GlcNAc...) asparagine glycan is attached at Asn-281.

Belongs to the peroxidase family. Classical plant (class III) peroxidase subfamily. The cofactor is Ca(2+). Heme b serves as cofactor.

The protein resides in the secreted. It carries out the reaction 2 a phenolic donor + H2O2 = 2 a phenolic radical donor + 2 H2O. Removal of H(2)O(2), oxidation of toxic reductants, biosynthesis and degradation of lignin, suberization, auxin catabolism, response to environmental stresses such as wounding, pathogen attack and oxidative stress. These functions might be dependent on each isozyme/isoform in each plant tissue. This chain is Peroxidase N (HRPN), found in Armoracia rusticana (Horseradish).